The primary structure comprises 1733 residues: Polyketide synthase Pks13 (1733 aa).

Residues 17-95 (ELTVPEMRQW…SLATRIIEGE (79 aa)) form the Carrier 1 domain. Ser55 is subject to O-(pantetheine 4'-phosphoryl)serine. In terms of domain architecture, Ketosynthase family 3 (KS3) spans 116–541 (RVDIAIVGLS…GANAHVVVRE (426 aa)). Catalysis depends on Cys287, which acts as the Acyl-thioester intermediate; for beta-ketoacyl synthase activity. Residues His423 and His463 each act as for beta-ketoacyl synthase activity in the active site. Positions 548 to 560 (VEKEPEPEPEPKA) are enriched in basic and acidic residues. The interval 548–567 (VEKEPEPEPEPKAAAEPAEA) is disordered. An acyltransferase region spans residues 713–1034 (VWVLAGFGAQ…MVSTMAQLYV (322 aa)). The active-site Acyl-ester intermediate; for acyltransferase activity is Ser801. In terms of domain architecture, Carrier 2 spans 1232–1309 (ETIAERLGLI…KLIEYAVEHR (78 aa)). An O-(pantetheine 4'-phosphoryl)serine modification is found at Ser1266. The tract at residues 1344–1368 (PVDSEAGVALPSPQNGEQPNPTGPA) is disordered. The interval 1470–1563 (PVFVFHPAGG…RFVGLIDAVR (94 aa)) is thioesterase-like. Ser1533 acts as the For thioesterase-like activity in catalysis.

4'-phosphopantetheine is transferred from CoA to specific serines of apo-Pks13 by PptT.

The protein operates within lipid metabolism; mycolic acid biosynthesis. Its activity is regulated as follows. The presence of FadD32 is necessary for the transfer of the acyl chain from the AMP carrier onto Pks13. In terms of biological role, involved in the biosynthesis of mycolic acids. Forms, with FadD32, the initiation module of the mycolic condensation system. Synthesizes, in coupled reaction with FadD32, the biosynthetic precursors of mycolic acids, alpha-alkyl beta-ketoacids, via the condensation of two long chain fatty acid derivatives, a very long meromycoloyl-AMP and a shorter 2-carboxyacyl-CoA. The acyl chain of the acyl-AMP produced by FadD32 is specifically transferred onto the N-terminal ACP domain of Pks13, and then transferred onto the KS domain. The extender unit carboxyacyl-CoA is specifically loaded onto the AT domain, which catalyzes the covalent attachment of the carboxyacyl chain to its active site, and its subsequent transfer onto the P-pant arm of the C-terminal ACP domain. The KS domain catalyzes the condensation between the two loaded fatty acyl chains to produce an alpha-alkyl beta-ketothioester linked to the C-ACP domain. Then, the thioesterase-like domain acts as a transacylase and is responsible for both the release and the transfer of the alpha-alkyl beta-ketoacyl chain onto a polyol acceptor molecule, particularly trehalose, leading to the formation of the trehalose monomycolate precursor. The polypeptide is Polyketide synthase Pks13 (Mycobacterium tuberculosis (strain ATCC 25618 / H37Rv)).